The chain runs to 427 residues: Enolase (427 aa).

Gln163 provides a ligand contact to (2R)-2-phosphoglycerate. Catalysis depends on Glu205, which acts as the Proton donor. Mg(2+) contacts are provided by Asp242, Glu285, and Asp312. Residues Lys337, Arg366, Ser367, and Lys388 each coordinate (2R)-2-phosphoglycerate. Lys337 (proton acceptor) is an active-site residue.

It belongs to the enolase family. Requires Mg(2+) as cofactor.

Its subcellular location is the cytoplasm. The protein resides in the secreted. It localises to the cell surface. It carries out the reaction (2R)-2-phosphoglycerate = phosphoenolpyruvate + H2O. It functions in the pathway carbohydrate degradation; glycolysis; pyruvate from D-glyceraldehyde 3-phosphate: step 4/5. In terms of biological role, catalyzes the reversible conversion of 2-phosphoglycerate (2-PG) into phosphoenolpyruvate (PEP). It is essential for the degradation of carbohydrates via glycolysis. The sequence is that of Enolase from Nitrobacter hamburgensis (strain DSM 10229 / NCIMB 13809 / X14).